The sequence spans 205 residues: MIGRLRGIILEKQPPQVLIEANGVGYEVHMPMTCFYELPELNQEAIIFTHFVVREDAQLLFGFNDKQERALFRELIKVNGVGPKLALAILSGMSATQFVSAVEREEIGALIKLPGVGKKTAERLVVEMKDRFKGLSGDLFNSVSDIPLTSPANVDNRVGEPEAEAAAALVALGYKPQEASRMISKIARPDADCETLIRDALRAAL.

The segment at 1–64 (MIGRLRGIIL…EDAQLLFGFN (64 aa)) is domain I. The domain II stretch occupies residues 65 to 143 (DKQERALFRE…GLSGDLFNSV (79 aa)). Positions 144-156 (SDIPLTSPANVDN) are flexible linker. Residues 157 to 205 (RVGEPEAEAAAALVALGYKPQEASRMISKIARPDADCETLIRDALRAAL) are domain III.

Belongs to the RuvA family. In terms of assembly, homotetramer. Forms an RuvA(8)-RuvB(12)-Holliday junction (HJ) complex. HJ DNA is sandwiched between 2 RuvA tetramers; dsDNA enters through RuvA and exits via RuvB. An RuvB hexamer assembles on each DNA strand where it exits the tetramer. Each RuvB hexamer is contacted by two RuvA subunits (via domain III) on 2 adjacent RuvB subunits; this complex drives branch migration. In the full resolvosome a probable DNA-RuvA(4)-RuvB(12)-RuvC(2) complex forms which resolves the HJ.

The protein localises to the cytoplasm. Its function is as follows. The RuvA-RuvB-RuvC complex processes Holliday junction (HJ) DNA during genetic recombination and DNA repair, while the RuvA-RuvB complex plays an important role in the rescue of blocked DNA replication forks via replication fork reversal (RFR). RuvA specifically binds to HJ cruciform DNA, conferring on it an open structure. The RuvB hexamer acts as an ATP-dependent pump, pulling dsDNA into and through the RuvAB complex. HJ branch migration allows RuvC to scan DNA until it finds its consensus sequence, where it cleaves and resolves the cruciform DNA. This chain is Holliday junction branch migration complex subunit RuvA, found in Pectobacterium atrosepticum (strain SCRI 1043 / ATCC BAA-672) (Erwinia carotovora subsp. atroseptica).